A 397-amino-acid polypeptide reads, in one-letter code: Methylthioribose kinase (397 aa).

ATP is bound by residues Asn-44, Lys-61, and 115–117 (EDL). Asp-233 contacts substrate. Residue 250 to 252 (DPE) coordinates ATP. Residue Arg-340 coordinates substrate.

It belongs to the methylthioribose kinase family. As to quaternary structure, homodimer.

The enzyme catalyses 5-(methylsulfanyl)-D-ribose + ATP = 5-(methylsulfanyl)-alpha-D-ribose 1-phosphate + ADP + H(+). Its pathway is amino-acid biosynthesis; L-methionine biosynthesis via salvage pathway; S-methyl-5-thio-alpha-D-ribose 1-phosphate from S-methyl-5'-thioadenosine (hydrolase route): step 2/2. Its function is as follows. Catalyzes the phosphorylation of methylthioribose into methylthioribose-1-phosphate. The chain is Methylthioribose kinase (mtnK) from Bacillus subtilis (strain 168).